The sequence spans 626 residues: Glutamate--cysteine ligase (626 aa).

This sequence belongs to the glutamate--cysteine ligase type 3 family. Monomer.

The catalysed reaction is L-cysteine + L-glutamate + ATP = gamma-L-glutamyl-L-cysteine + ADP + phosphate + H(+). The protein operates within sulfur metabolism; glutathione biosynthesis; glutathione from L-cysteine and L-glutamate: step 1/2. Its function is as follows. An essential enzyme in glutathione (L-gamma-glutamyl-L-cysteinylglycine, GSH) biosynthesis, GSH is essential for growth and differentiation to prespore stage. Catalyzes the condensation of glutamate to cysteine. This is Glutamate--cysteine ligase (gcsA) from Dictyostelium discoideum (Social amoeba).